Consider the following 216-residue polypeptide: Pyrophosphatase PpaX (216 aa).

The active-site Nucleophile is D9.

The protein belongs to the HAD-like hydrolase superfamily. PpaX family. It depends on Mg(2+) as a cofactor.

The enzyme catalyses diphosphate + H2O = 2 phosphate + H(+). Its function is as follows. Hydrolyzes pyrophosphate formed during P-Ser-HPr dephosphorylation by HPrK/P. Might play a role in controlling the intracellular pyrophosphate pool. The protein is Pyrophosphatase PpaX of Bacillus cereus (strain AH820).